The chain runs to 425 residues: Histone-binding protein RBBP7 (425 aa).

WD repeat units follow at residues 47-122, 128-173, 181-217, 228-269, 275-312, 318-369, and 376-403; these read QWLP…KINH, RARY…LRLR, GLSWNSNLSGHLLSASDDHTVCLWDISAGPKEGKVVD, VVED…HSVD, VNCLSFNPYSEFILATGSADKTVALWDLRNLKLKLHSF, EIFQ…LFIH, and ISDFSWNPNEPWVICSVSEDNIMQIWQM.

This sequence belongs to the WD repeat RBAP46/RBAP48/MSI1 family. As to quaternary structure, binds directly to helix 1 of the histone fold of histone H4, a region that is not accessible when H4 is in chromatin.

The protein resides in the nucleus. In terms of biological role, core histone-binding subunit that may target chromatin remodeling factors, histone acetyltransferases and histone deacetylases to their histone substrates in a manner that is regulated by nucleosomal DNA. Component of several complexes which regulate chromatin metabolism. The protein is Histone-binding protein RBBP7 (rbbp7) of Xenopus laevis (African clawed frog).